Reading from the N-terminus, the 348-residue chain is GMP reductase (348 aa).

Residue 108–131 participates in NADP(+) binding; the sequence is ADFQKTKDIMALSDELIFICVDIA. 2 residues coordinate K(+): Gly-181 and Gly-183. Catalysis depends on Cys-186, which acts as the Thioimidate intermediate. Residue 216–239 participates in NADP(+) binding; that stretch reads IIGDGGCSCAGDVSKAFGGGADFV.

It belongs to the IMPDH/GMPR family. GuaC type 1 subfamily. As to quaternary structure, homotetramer.

It catalyses the reaction IMP + NH4(+) + NADP(+) = GMP + NADPH + 2 H(+). Its function is as follows. Catalyzes the irreversible NADPH-dependent deamination of GMP to IMP. It functions in the conversion of nucleobase, nucleoside and nucleotide derivatives of G to A nucleotides, and in maintaining the intracellular balance of A and G nucleotides. This Vibrio parahaemolyticus serotype O3:K6 (strain RIMD 2210633) protein is GMP reductase.